The following is a 217-amino-acid chain: Probable GTP-binding protein EngB (217 aa).

The region spanning 24 to 207 (SQPEICFAGR…HELIESWLIP (184 aa)) is the EngB-type G domain. GTP is bound by residues 32–39 (GRSNAGKS), 59–63 (GRTQH), 81–84 (DLPG), 148–151 (TKCD), and 185–188 (LFSA). Residues Ser39 and Thr61 each contribute to the Mg(2+) site.

This sequence belongs to the TRAFAC class TrmE-Era-EngA-EngB-Septin-like GTPase superfamily. EngB GTPase family. The cofactor is Mg(2+).

Its function is as follows. Necessary for normal cell division and for the maintenance of normal septation. The chain is Probable GTP-binding protein EngB from Paraburkholderia phytofirmans (strain DSM 17436 / LMG 22146 / PsJN) (Burkholderia phytofirmans).